A 255-amino-acid polypeptide reads, in one-letter code: Imidazole glycerol phosphate synthase subunit HisF (255 aa).

Catalysis depends on residues Asp-11 and Asp-130.

This sequence belongs to the HisA/HisF family. Heterodimer of HisH and HisF.

It is found in the cytoplasm. The enzyme catalyses 5-[(5-phospho-1-deoxy-D-ribulos-1-ylimino)methylamino]-1-(5-phospho-beta-D-ribosyl)imidazole-4-carboxamide + L-glutamine = D-erythro-1-(imidazol-4-yl)glycerol 3-phosphate + 5-amino-1-(5-phospho-beta-D-ribosyl)imidazole-4-carboxamide + L-glutamate + H(+). It participates in amino-acid biosynthesis; L-histidine biosynthesis; L-histidine from 5-phospho-alpha-D-ribose 1-diphosphate: step 5/9. In terms of biological role, IGPS catalyzes the conversion of PRFAR and glutamine to IGP, AICAR and glutamate. The HisF subunit catalyzes the cyclization activity that produces IGP and AICAR from PRFAR using the ammonia provided by the HisH subunit. In Akkermansia muciniphila (strain ATCC BAA-835 / DSM 22959 / JCM 33894 / BCRC 81048 / CCUG 64013 / CIP 107961 / Muc), this protein is Imidazole glycerol phosphate synthase subunit HisF.